The primary structure comprises 566 residues: E3 ubiquitin-protein ligase RNF220 (566 aa).

Residue lysine 277 forms a Glycyl lysine isopeptide (Lys-Gly) (interchain with G-Cter in SUMO2) linkage. The disordered stretch occupies residues 277–297 (KREGESPTASPHSSATDDLHH). Serine 390 is modified (phosphoserine). Residues 485 to 513 (EDSAVTTFEALKARVRELERQLSRGDRYK) adopt a coiled-coil conformation. A required for targeting to the cytoplasm region spans residues 514 to 522 (CLICMDSYS). The segment at 514-553 (CLICMDSYSMPLTSIQCWHVHCEECWLRTLGAKKLCPQCY) adopts an RING-type zinc-finger fold.

Interacts with SIN3B. Interacts with CTNNB1 (via Armadillo repeats 2-8). Interacts with USP7 (via MATH domain). Auto-ubiquitinated; leads to proteasomal degradation.

The protein resides in the cytoplasm. The enzyme catalyses S-ubiquitinyl-[E2 ubiquitin-conjugating enzyme]-L-cysteine + [acceptor protein]-L-lysine = [E2 ubiquitin-conjugating enzyme]-L-cysteine + N(6)-ubiquitinyl-[acceptor protein]-L-lysine.. It participates in protein modification; protein ubiquitination. E3 ubiquitin-protein ligase that promotes the ubiquitination and proteasomal degradation of SIN3B. Independently of its E3 ligase activity, acts as a CTNNB1 stabilizer through USP7-mediated deubiquitination of CTNNB1 promoting Wnt signaling. The sequence is that of E3 ubiquitin-protein ligase RNF220 (RNF220) from Bos taurus (Bovine).